A 286-amino-acid polypeptide reads, in one-letter code: Shikimate dehydrogenase (NADP(+)) (286 aa).

Residues 20 to 22 (SLS) and threonine 65 contribute to the shikimate site. Catalysis depends on lysine 69, which acts as the Proton acceptor. Aspartate 81 serves as a coordination point for NADP(+). The shikimate site is built by asparagine 90 and aspartate 105. NADP(+)-binding positions include 128–132 (GAGGA) and threonine 217. Residue tyrosine 219 coordinates shikimate. Residue glycine 240 coordinates NADP(+).

Belongs to the shikimate dehydrogenase family. In terms of assembly, homodimer.

The catalysed reaction is shikimate + NADP(+) = 3-dehydroshikimate + NADPH + H(+). It functions in the pathway metabolic intermediate biosynthesis; chorismate biosynthesis; chorismate from D-erythrose 4-phosphate and phosphoenolpyruvate: step 4/7. In terms of biological role, involved in the biosynthesis of the chorismate, which leads to the biosynthesis of aromatic amino acids. Catalyzes the reversible NADPH linked reduction of 3-dehydroshikimate (DHSA) to yield shikimate (SA). The sequence is that of Shikimate dehydrogenase (NADP(+)) from Syntrophobacter fumaroxidans (strain DSM 10017 / MPOB).